The primary structure comprises 357 residues: Neutral protease 2 homolog UREG_02006 (357 aa).

An N-terminal signal peptide occupies residues 1-19; that stretch reads MLFSSRFLALAALLGQALA. The propeptide occupies 20–179; that stretch reads LPIDDFSQSD…QSAVPTIEKR (160 aa). 2 cysteine pairs are disulfide-bonded: C187–C259 and C266–C284. H308 is a Zn(2+) binding site. E309 is an active-site residue. Residues H312 and D323 each contribute to the Zn(2+) site.

Belongs to the peptidase M35 family. Requires Zn(2+) as cofactor.

It localises to the secreted. It carries out the reaction Preferential cleavage of bonds with hydrophobic residues in P1'. Also 3-Asn-|-Gln-4 and 8-Gly-|-Ser-9 bonds in insulin B chain.. In terms of biological role, secreted metalloproteinase that allows assimilation of proteinaceous substrates. Shows high activities on basic nuclear substrates such as histone and protamine. This chain is Neutral protease 2 homolog UREG_02006, found in Uncinocarpus reesii (strain UAMH 1704).